A 96-amino-acid polypeptide reads, in one-letter code: Molybdopterin synthase sulfur carrier subunit (96 aa).

A 1-thioglycine; alternate modification is found at glycine 96. Glycine 96 carries the post-translational modification Glycyl adenylate; alternate.

The protein belongs to the MoaD family. MOCS2A subfamily. In terms of assembly, heterotetramer; composed of 2 small (MOCS2A) and 2 large (MOCS2B) subunits. C-terminal thiocarboxylation occurs in 2 steps, it is first acyl-adenylated (-COAMP) via the hesA/moeB/thiF part of MOCS3, then thiocarboxylated (-COSH) via the rhodanese domain of MOCS3.

The protein resides in the cytoplasm. It participates in cofactor biosynthesis; molybdopterin biosynthesis. Functionally, acts as a sulfur carrier required for molybdopterin biosynthesis. Component of the molybdopterin synthase complex that catalyzes the conversion of precursor Z into molybdopterin by mediating the incorporation of 2 sulfur atoms into precursor Z to generate a dithiolene group. In the complex, serves as sulfur donor by being thiocarboxylated (-COSH) at its C-terminus by MOCS3. After interaction with MOCS2B, the sulfur is then transferred to precursor Z to form molybdopterin. This Arabidopsis thaliana (Mouse-ear cress) protein is Molybdopterin synthase sulfur carrier subunit.